Consider the following 564-residue polypeptide: Probable metalloprotease ARX1 (564 aa).

Belongs to the peptidase M24 family. Component of the nucleoplasmic and cytoplasmic pre-60S ribosomal particles.

It localises to the cytoplasm. Its subcellular location is the nucleus. Probable metalloprotease involved in proper assembly of pre-ribosomal particles during the biogenesis of the 60S ribosomal subunit. Accompanies the pre-60S particles to the cytoplasm. The polypeptide is Probable metalloprotease ARX1 (ARX1) (Debaryomyces hansenii (strain ATCC 36239 / CBS 767 / BCRC 21394 / JCM 1990 / NBRC 0083 / IGC 2968) (Yeast)).